The following is a 122-amino-acid chain: Large ribosomal subunit protein uL14 (122 aa).

The protein belongs to the universal ribosomal protein uL14 family. Part of the 50S ribosomal subunit. Forms a cluster with proteins L3 and L19. In the 70S ribosome, L14 and L19 interact and together make contacts with the 16S rRNA in bridges B5 and B8.

Functionally, binds to 23S rRNA. Forms part of two intersubunit bridges in the 70S ribosome. This Ralstonia nicotianae (strain ATCC BAA-1114 / GMI1000) (Ralstonia solanacearum) protein is Large ribosomal subunit protein uL14.